Here is a 197-residue protein sequence, read N- to C-terminus: Fucoxanthin-chlorophyll a-c binding protein D, chloroplastic (197 aa).

The N-terminal 31 residues, 1–31, are a transit peptide targeting the chloroplast; it reads MKTAVIASLIAGAAAFAPAKNAARTSVATNM. The next 3 helical transmembrane spans lie at 73 to 94, 114 to 133, and 174 to 196; these read ISML…PGTI, PAGG…SSVM, and GRAA…SLLP.

The protein belongs to the fucoxanthin chlorophyll protein family. As to quaternary structure, the LHC complex of chromophytic algae is composed of fucoxanthin, chlorophyll A and C bound non-covalently by fucoxanthin chlorophyll proteins (FCPs). The ratio of the pigments in LHC; fucoxanthin: chlorophyll C: chlorophyll A; (0.6-1): (0.1-0.3): (1).

The protein resides in the plastid. It localises to the chloroplast thylakoid membrane. Its function is as follows. The light-harvesting complex (LHC) functions as a light receptor, it captures and delivers excitation energy to photosystems with which it is closely associated. Energy is transferred from the carotenoid and chlorophyll C (or B) to chlorophyll A and the photosynthetic reaction centers where it is used to synthesize ATP and reducing power. This chain is Fucoxanthin-chlorophyll a-c binding protein D, chloroplastic (FCPD), found in Phaeodactylum tricornutum (Diatom).